We begin with the raw amino-acid sequence, 368 residues long: Chorismate synthase (368 aa).

Arginine 46 lines the NADP(+) pocket. Residues arginine 124–serine 126, glycine 284, lysine 299–serine 303, and arginine 326 contribute to the FMN site.

The protein belongs to the chorismate synthase family. The cofactor is FMNH2.

It catalyses the reaction 5-O-(1-carboxyvinyl)-3-phosphoshikimate = chorismate + phosphate. The protein operates within metabolic intermediate biosynthesis; chorismate biosynthesis; chorismate from D-erythrose 4-phosphate and phosphoenolpyruvate: step 7/7. Functionally, catalyzes the anti-1,4-elimination of the C-3 phosphate and the C-6 proR hydrogen from 5-enolpyruvylshikimate-3-phosphate (EPSP) to yield chorismate, which is the branch point compound that serves as the starting substrate for the three terminal pathways of aromatic amino acid biosynthesis. This reaction introduces a second double bond into the aromatic ring system. The chain is Chorismate synthase from Pyrobaculum arsenaticum (strain DSM 13514 / JCM 11321 / PZ6).